The chain runs to 298 residues: Zinc-alpha-2-glycoprotein (298 aa).

The first 20 residues, 1 to 20, serve as a signal peptide directing secretion; it reads MVRMVPVLLSLLLLLGPAVP. Glutamine 21 is subject to Pyrrolidone carboxylic acid. An N-linked (GlcNAc...) (complex) asparagine glycan is attached at asparagine 109. Residue asparagine 112 is glycosylated (N-linked (GlcNAc...) asparagine). Cystine bridges form between cysteine 123–cysteine 186 and cysteine 225–cysteine 280. An N-linked (GlcNAc...) (complex) asparagine glycan is attached at asparagine 128. Positions 207–292 constitute an Ig-like C1-type domain; the sequence is PSVVVTSHQA…QHSSLAQPLV (86 aa). Asparagine 259 is a glycosylation site (N-linked (GlcNAc...) asparagine).

This sequence belongs to the MHC class I family. In terms of assembly, interacts with PIP. In terms of processing, N-glycosylated. N-glycan at Asn-128: Hex5HexNAc4. As to expression, blood plasma, seminal plasma, urine, saliva, sweat, epithelial cells of various human glands, liver.

Its subcellular location is the secreted. Stimulates lipid degradation in adipocytes and causes the extensive fat losses associated with some advanced cancers. May bind polyunsaturated fatty acids. This chain is Zinc-alpha-2-glycoprotein (AZGP1), found in Homo sapiens (Human).